A 294-amino-acid polypeptide reads, in one-letter code: 4-hydroxy-tetrahydrodipicolinate synthase (294 aa).

Residue T45 participates in pyruvate binding. Residue Y133 is the Proton donor/acceptor of the active site. K161 functions as the Schiff-base intermediate with substrate in the catalytic mechanism. I203 contributes to the pyruvate binding site.

This sequence belongs to the DapA family. In terms of assembly, homotetramer; dimer of dimers.

It localises to the cytoplasm. The catalysed reaction is L-aspartate 4-semialdehyde + pyruvate = (2S,4S)-4-hydroxy-2,3,4,5-tetrahydrodipicolinate + H2O + H(+). The protein operates within amino-acid biosynthesis; L-lysine biosynthesis via DAP pathway; (S)-tetrahydrodipicolinate from L-aspartate: step 3/4. Its function is as follows. Catalyzes the condensation of (S)-aspartate-beta-semialdehyde [(S)-ASA] and pyruvate to 4-hydroxy-tetrahydrodipicolinate (HTPA). The polypeptide is 4-hydroxy-tetrahydrodipicolinate synthase (Shewanella baltica (strain OS223)).